The following is a 320-amino-acid chain: Pantothenate kinase (320 aa).

96-103 (GSVAVGKS) serves as a coordination point for ATP.

This sequence belongs to the prokaryotic pantothenate kinase family.

It localises to the cytoplasm. It catalyses the reaction (R)-pantothenate + ATP = (R)-4'-phosphopantothenate + ADP + H(+). The protein operates within cofactor biosynthesis; coenzyme A biosynthesis; CoA from (R)-pantothenate: step 1/5. The protein is Pantothenate kinase of Brevibacillus brevis (strain 47 / JCM 6285 / NBRC 100599).